Reading from the N-terminus, the 65-residue chain is Carboxypeptidase A inhibitor (65 aa).

Belongs to the protease inhibitor I44 family.

Its subcellular location is the secreted. Its function is as follows. Inhibits carboxypeptidase A. The chain is Carboxypeptidase A inhibitor from Ascaris suum (Pig roundworm).